A 701-amino-acid polypeptide reads, in one-letter code: Dynein axonemal intermediate chain 1 (701 aa).

2 disordered regions span residues 1-45 (MPSK…VRPP) and 119-165 (EMVA…DIPA). Serine 124 and serine 127 each carry phosphoserine. A compositionally biased stretch (acidic residues) spans 136-155 (ENLEEEEEPKEGEGEAEAEA). WD repeat units lie at residues 382–422 (SSES…SQPC), 431–474 (KHTD…LVHI), 539–579 (AHNM…PMFI), 581–621 (DLNS…YEAI), and 629–668 (KKKN…RKMP).

Belongs to the dynein intermediate chain family. In terms of assembly, consists of at least two heavy chains and a number of intermediate and light chains. Interacts with BICD2. Interacts with CFAP45 and CFAP52. Interacts with CFAP53.

It is found in the cytoplasm. The protein localises to the cytoskeleton. Its subcellular location is the cilium axoneme. Part of the dynein complex of respiratory cilia. The protein is Dynein axonemal intermediate chain 1 (Dnai1) of Mus musculus (Mouse).